A 112-amino-acid chain; its full sequence is MATSCNLADRQCTPCEGGIAPLENSVAAVMLDTLPGWTLDGQRLDKTYVFRNHYEAMAFVNAIAWVSHRENHHPELIVGYKDVRVRYWTHAIGGLSENDFICAAKLEKLLEI.

Belongs to the pterin-4-alpha-carbinolamine dehydratase family.

The enzyme catalyses (4aS,6R)-4a-hydroxy-L-erythro-5,6,7,8-tetrahydrobiopterin = (6R)-L-erythro-6,7-dihydrobiopterin + H2O. The chain is Putative pterin-4-alpha-carbinolamine dehydratase from Dechloromonas aromatica (strain RCB).